The chain runs to 350 residues: Outer membrane protein A (350 aa).

The first 21 residues, 1–21, serve as a signal peptide directing secretion; sequence MKKTAIAIAVALAGFATVAQA. Transmembrane regions (beta stranded) follow at residues 27-37, 59-70, 74-82, 100-111, 116-124, 146-155, 160-167, and 186-194; these read TWYAGGKLGWS, QLGAGAFGGYQV, LGFEMGYDW, QAVQLTAKLGYP, LDIYTRLGG, PVFAGGVEWA, IATRLEYQ, and MLSVGVSYR. 4 repeat units span residues 205 to 206, 207 to 208, 209 to 210, and 211 to 212. The 4 X 2 AA tandem repeats of A-P stretch occupies residues 205-212; it reads APAPAPAP. Positions 214-342 constitute an OmpA-like domain; that stretch reads VTTKTFTLKS…RVAIEVKGYK (129 aa). A disulfide bridge links cysteine 315 with cysteine 327.

The protein belongs to the outer membrane OOP (TC 1.B.6) superfamily. OmpA family. Monomer and homodimer.

The protein localises to the cell outer membrane. Functionally, with TolR probably plays a role in maintaining the position of the peptidoglycan cell wall in the periplasm. Acts as a porin with low permeability that allows slow penetration of small solutes; an internal gate slows down solute passage. Required for conjugation with F-type plasmids; probably serves as the mating receptor on recipient cells. This chain is Outer membrane protein A, found in Klebsiella aerogenes (Enterobacter aerogenes).